The sequence spans 795 residues: Phenylalanine--tRNA ligase beta subunit (795 aa).

The region spanning 39 to 148 (AGEFNGVVVG…ADAPVGKDFR (110 aa)) is the tRNA-binding domain. The B5 domain occupies 401-476 (PKLNKVQLRR…RIYGYNSIPN (76 aa)). The Mg(2+) site is built by D454, D460, E463, and E464. The FDX-ACB domain maps to 701–794 (SKFPANKRDL…LKDRFNAYLR (94 aa)).

The protein belongs to the phenylalanyl-tRNA synthetase beta subunit family. Type 1 subfamily. As to quaternary structure, tetramer of two alpha and two beta subunits. The cofactor is Mg(2+).

It is found in the cytoplasm. It carries out the reaction tRNA(Phe) + L-phenylalanine + ATP = L-phenylalanyl-tRNA(Phe) + AMP + diphosphate + H(+). In Mannheimia succiniciproducens (strain KCTC 0769BP / MBEL55E), this protein is Phenylalanine--tRNA ligase beta subunit.